Here is a 611-residue protein sequence, read N- to C-terminus: Urease subunit alpha 2 (611 aa).

In terms of domain architecture, Urease spans 154-611 (GGIDSHIHFI…LPMAQRYFLF (458 aa)). Ni(2+) contacts are provided by His159, His161, and Lys242. The residue at position 242 (Lys242) is an N6-carboxylysine. Substrate is bound at residue His244. His271 and His297 together coordinate Ni(2+). His345 functions as the Proton donor in the catalytic mechanism. Ni(2+) is bound at residue Asp385. The segment at 411–434 (GHLAPDQSAKTEQSLDNIMLSPTD) is disordered. Polar residues predominate over residues 418–434 (SAKTEQSLDNIMLSPTD).

It belongs to the metallo-dependent hydrolases superfamily. Urease alpha subunit family. As to quaternary structure, heterotrimer of UreA (gamma), UreB (beta) and UreC (alpha) subunits. Three heterotrimers associate to form the active enzyme. Requires Ni cation as cofactor. Post-translationally, carboxylation allows a single lysine to coordinate two nickel ions.

The protein resides in the cytoplasm. The enzyme catalyses urea + 2 H2O + H(+) = hydrogencarbonate + 2 NH4(+). The protein operates within nitrogen metabolism; urea degradation; CO(2) and NH(3) from urea (urease route): step 1/1. In Psychrobacter cryohalolentis (strain ATCC BAA-1226 / DSM 17306 / VKM B-2378 / K5), this protein is Urease subunit alpha 2.